Here is a 981-residue protein sequence, read N- to C-terminus: Ubiquitin carboxyl-terminal hydrolase 15 (981 aa).

The residue at position 2 (Ala2) is an N-acetylalanine. A mediates interaction with SART3 region spans residues 2–223 (AEGGAADLDT…KNEDGTWPRG (222 aa)). One can recognise a DUSP domain in the interval 7–118 (ADLDTQRSDI…GQEPIARKVV (112 aa)). The interval 216 to 237 (EDGTWPRGPSTPKSPGASNFST) is disordered. Thr226 carries the phosphothreonine modification. Residues 226–237 (TPKSPGASNFST) show a composition bias toward polar residues. Residues Ser229 and Ser242 each carry the phosphoserine modification. The region spanning 289–933 (CGLSNLGNTC…AAYVLFYQRQ (645 aa)) is the USP domain. Cys298 serves as the catalytic Nucleophile. Thr602 carries the post-translational modification Phosphothreonine. The interval 633 to 694 (CCEDQNINGN…GGDNDSENGL (62 aa)) is disordered. Acidic residues predominate over residues 656 to 673 (METDEPDDESSQDQELPS). Catalysis depends on His891, which acts as the Proton acceptor. Residues 952–981 (SAATGIPLESDEDSNDNDNDLENENCMHTN) form a disordered region. Positions 960–974 (ESDEDSNDNDNDLEN) are enriched in acidic residues. 2 positions are modified to phosphoserine: Ser961 and Ser965.

This sequence belongs to the peptidase C19 family. As to quaternary structure, a homodimer structure has been reported; however it is unclear whether the protein form a homodimer in vivo. Identified in a complex with the COP9 signalosome complex (CSN). Interacts with SMAD1, SMAD2 and SMAD3; the interaction is direct. Forms a complex with SMURF2 and SMAD7. Interacts with TGFBR1. Interacts with SART3; the interaction is direct. May interact with RNF20 and RNF40. May interact with PRKN. Interacts with INCA1. Post-translationally, phosphorylated. Phosphorylation protects against ubiquitination and subsequent degradation by the proteasome. Ubiquitinated, leading to degradation by the proteasome. Widely expressed with highest levels in the brain and spleen, and lowest levels in the muscles (at protein level). In the midbrain, strong expression in neurons including the dopaminergic neurons (at protein level). Widely expressed with highest levels in testis, heart and liver.

The protein resides in the cytoplasm. It is found in the nucleus. Its subcellular location is the mitochondrion. The enzyme catalyses Thiol-dependent hydrolysis of ester, thioester, amide, peptide and isopeptide bonds formed by the C-terminal Gly of ubiquitin (a 76-residue protein attached to proteins as an intracellular targeting signal).. Its function is as follows. Hydrolase that removes conjugated ubiquitin from target proteins and regulates various pathways such as the TGF-beta receptor signaling, NF-kappa-B and RNF41/NRDP1-PRKN pathways. Acts as a key regulator of TGF-beta receptor signaling pathway, but the precise mechanism is still unclear: according to a report, acts by promoting deubiquitination of monoubiquitinated R-SMADs (SMAD1, SMAD2 and/or SMAD3), thereby alleviating inhibition of R-SMADs and promoting activation of TGF-beta target genes. According to another reports, regulates the TGF-beta receptor signaling pathway by mediating deubiquitination and stabilization of TGFBR1, leading to an enhanced TGF-beta signal. Able to mediate deubiquitination of monoubiquitinated substrates, 'Lys-27'-, 'Lys-48'- and 'Lys-63'-linked polyubiquitin chains. May also regulate gene expression and/or DNA repair through the deubiquitination of histone H2B. Acts as an inhibitor of mitophagy by counteracting the action of parkin (PRKN): hydrolyzes cleavage of 'Lys-48'- and 'Lys-63'-linked polyubiquitin chains attached by parkin on target proteins such as MFN2, thereby reducing parkin's ability to drive mitophagy. Acts as an associated component of COP9 signalosome complex (CSN) and regulates different pathways via this association: regulates NF-kappa-B by mediating deubiquitination of NFKBIA and deubiquitinates substrates bound to VCP. Involved in endosome organization by mediating deubiquitination of SQSTM1: ubiquitinated SQSTM1 forms a molecular bridge that restrains cognate vesicles in the perinuclear region and its deubiquitination releases target vesicles for fast transport into the cell periphery. Acts as a negative regulator of antifungal immunity by mediating 'Lys-27'-linked deubiquitination of CARD9, thereby inactivating CARD9. The protein is Ubiquitin carboxyl-terminal hydrolase 15 (Usp15) of Mus musculus (Mouse).